We begin with the raw amino-acid sequence, 48 residues long: uncharacterized protein (48 aa).

The interval 1–48 is disordered; the sequence is MTKIPINIPATSGKIKFGITPSSNKSPSLSPSPSNGQLGGGRGYILEP. Residues 21 to 36 are compositionally biased toward low complexity; that stretch reads PSSNKSPSLSPSPSNG. The span at 37-48 shows a compositional bias: gly residues; that stretch reads QLGGGRGYILEP.

This is an uncharacterized protein from Dictyostelium discoideum (Social amoeba).